The chain runs to 445 residues: Canavalin (445 aa).

Positions 1–26 (MAFSARFPLWLLLGVVLLASVSASFA) are cleaved as a signal peptide. 2 Cupin type-1 domains span residues 49–207 (YLFR…DEIE) and 249–407 (FNLR…EEVE).

Belongs to the 7S seed storage protein family. Homotrimer.

Its function is as follows. Seed storage protein. The protein is Canavalin of Canavalia gladiata (Sword bean).